A 342-amino-acid polypeptide reads, in one-letter code: Methylthioribose-1-phosphate isomerase (342 aa).

Substrate-binding positions include R49 to A51, R86, and Q187. D228 acts as the Proton donor in catalysis. Position 238 to 239 (N238 to K239) interacts with substrate.

The protein belongs to the eIF-2B alpha/beta/delta subunits family. MtnA subfamily.

The catalysed reaction is 5-(methylsulfanyl)-alpha-D-ribose 1-phosphate = 5-(methylsulfanyl)-D-ribulose 1-phosphate. Its pathway is amino-acid biosynthesis; L-methionine biosynthesis via salvage pathway; L-methionine from S-methyl-5-thio-alpha-D-ribose 1-phosphate: step 1/6. Catalyzes the interconversion of methylthioribose-1-phosphate (MTR-1-P) into methylthioribulose-1-phosphate (MTRu-1-P). This is Methylthioribose-1-phosphate isomerase from Enterobacter sp. (strain 638).